Reading from the N-terminus, the 197-residue chain is Putative peptidyl-prolyl cis-trans isomerase (197 aa).

The PPIase cyclophilin-type domain maps to 14 to 195 (NEIKVVMHTN…YDVVIESIDV (182 aa)).

It belongs to the cyclophilin-type PPIase family.

It carries out the reaction [protein]-peptidylproline (omega=180) = [protein]-peptidylproline (omega=0). Its function is as follows. PPIases accelerate the folding of proteins. It catalyzes the cis-trans isomerization of proline imidic peptide bonds in oligopeptides. The chain is Putative peptidyl-prolyl cis-trans isomerase from Staphylococcus epidermidis (strain ATCC 35984 / DSM 28319 / BCRC 17069 / CCUG 31568 / BM 3577 / RP62A).